The chain runs to 169 residues: Actin-related protein 2/3 complex subunit 4 (169 aa).

This sequence belongs to the ARPC4 family. As to quaternary structure, component of the Arp2/3 complex composed of arpB/Arp2, arpC/Arp3, arcA/p41-arc, arcB/p34-arc, arcC/p21-arc, arcD/p20-arc and arcE/p16-arc. Interacts with carmil (via the region between the LRR domain and COOH-terminal proline-rich domain); carmil is required for Arp2/3-dependent actin nucleation. Arp2/3 complex, MyoB, MyoC, and the alpha and beta subunits of capping protein all form a larger complex with carmil.

Its subcellular location is the cytoplasm. The protein localises to the cytoskeleton. It localises to the cytosol. It is found in the cell cortex. The protein resides in the cell projection. Its subcellular location is the pseudopodium. Its function is as follows. Functions as a component of the Arp2/3 complex which is involved in regulation of actin polymerization and together with an activating nucleation-promoting factor (NPF) mediates the formation of branched actin networks. Seems to contact the pointed end of the daughter actin filament. The Arp2/3 complex is involved in organizing the actin system in cell motility and chemotaxis, in phagocytosis and macropinocytosis, at late steps of endosome processing, and in mitosis. In concert with a group of other proteins, the Arp2/3 complex plays a general role in the rapid activation and adaptation of the actin system to its multiple functions. The chain is Actin-related protein 2/3 complex subunit 4 (arcD) from Dictyostelium discoideum (Social amoeba).